The primary structure comprises 299 residues: Bifunctional protein FolD 2 (299 aa).

Residues 168–170 (GRS), Ser193, and Ile234 contribute to the NADP(+) site.

Belongs to the tetrahydrofolate dehydrogenase/cyclohydrolase family. In terms of assembly, homodimer.

The catalysed reaction is (6R)-5,10-methylene-5,6,7,8-tetrahydrofolate + NADP(+) = (6R)-5,10-methenyltetrahydrofolate + NADPH. It catalyses the reaction (6R)-5,10-methenyltetrahydrofolate + H2O = (6R)-10-formyltetrahydrofolate + H(+). It functions in the pathway one-carbon metabolism; tetrahydrofolate interconversion. In terms of biological role, catalyzes the oxidation of 5,10-methylenetetrahydrofolate to 5,10-methenyltetrahydrofolate and then the hydrolysis of 5,10-methenyltetrahydrofolate to 10-formyltetrahydrofolate. This is Bifunctional protein FolD 2 from Rhizobium etli (strain ATCC 51251 / DSM 11541 / JCM 21823 / NBRC 15573 / CFN 42).